A 333-amino-acid polypeptide reads, in one-letter code: Torsin-1A (333 aa).

The N-terminal stretch at 1–20 (MKLGRATLALLLLVPCVVRA) is a signal peptide. Positions 92-252 (KPKKPLTLSL…VSVFNNKNSG (161 aa)) are interaction with SNAPIN. N-linked (GlcNAc...) asparagine glycosylation is found at asparagine 144 and asparagine 159. Residues 252–333 (GFWHSSLIDR…FTKLDYYLDD (82 aa)) form an interaction with KLC1 region. Residues 313–333 (KVFSDKGCKTVFTKLDYYLDD) are interaction with SYNE3.

This sequence belongs to the ClpA/ClpB family. Torsin subfamily. In terms of assembly, homohexamer. Interacts with TOR1B; the interaction may be specific of neural tissues. Interacts (ATP-bound) with TOR1AIP1 and TOR1AIP2; the interactions induce ATPase activity. Interacts with KLHL14; preferentially when ATP-free. Interacts with KLC1 (via TPR repeats); the interaction associates TOR1A with the kinesin oligomeric complex. Interacts with COPS4; the interaction associates TOR1A with the CSN complex. Interacts with SNAPIN; the interaction is direct and associates SNAPIN with the CSN complex. Interacts with STON2. Interacts (ATP-bound) with SYNE3 (via KASH domain); the interaction is required for SYNE3 nuclear envelope localization. Interacts with VIM; the interaction associates TOR1A with the cytoskeleton. Interacts with PLEC. Interacts (ATP-bound) with SLC6A3; regulates SLC6A3 transport to the plasma membrane. In terms of processing, N-glycosylated. In terms of tissue distribution, expressed in brain (at protein level).

The protein localises to the endoplasmic reticulum lumen. The protein resides in the nucleus inner membrane. It localises to the cell projection. Its subcellular location is the growth cone. It is found in the cytoplasmic vesicle membrane. The protein localises to the cytoplasmic vesicle. The protein resides in the secretory vesicle. It localises to the synaptic vesicle. The catalysed reaction is ATP + H2O = ADP + phosphate + H(+). Its function is as follows. Protein with chaperone functions important for the control of protein folding, processing, stability and localization as well as for the reduction of misfolded protein aggregates. Involved in the regulation of synaptic vesicle recycling, controls STON2 protein stability in collaboration with the COP9 signalosome complex (CSN). In the nucleus, may link the cytoskeleton with the nuclear envelope, this mechanism seems to be crucial for the control of nuclear polarity, cell movement and, specifically in neurons, nuclear envelope integrity. Participates in the cellular trafficking and may regulate the subcellular location of multipass membrane proteins such as the dopamine transporter SLC6A3, leading to the modulation of dopamine neurotransmission. In the endoplasmic reticulum, plays a role in the quality control of protein folding by increasing clearance of misfolded proteins such as SGCE variants or holding them in an intermediate state for proper refolding. May have a redundant function with TOR1B in non-neural tissues. The sequence is that of Torsin-1A (Tor1a) from Rattus norvegicus (Rat).